A 529-amino-acid chain; its full sequence is Cytochrome P450 monooxygenase patI (529 aa).

The Cytoplasmic segment spans residues Met1–Pro8. A helical transmembrane segment spans residues Ser9–Leu25. At Lys26–Asp529 the chain is on the lumenal side. 2 N-linked (GlcNAc...) asparagine glycosylation sites follow: Asn81 and Asn383. Cys449 lines the heme pocket.

It belongs to the cytochrome P450 family. The cofactor is heme.

Its subcellular location is the endoplasmic reticulum membrane. It carries out the reaction 3-hydroxybenzyl alcohol + reduced [NADPH--hemoprotein reductase] + O2 = gentisyl alcohol + oxidized [NADPH--hemoprotein reductase] + H2O + H(+). The protein operates within mycotoxin biosynthesis; patulin biosynthesis. Cytochrome P450 monooxygenase; part of the gene cluster that mediates the biosynthesis of patulin, an acetate-derived tetraketide mycotoxin produced by several fungal species that shows antimicrobial properties against several bacteria. PatI catalyzes the conversion of m-hydroxybenzyl alcohol into gentisyl alcohol. The pathway begins with the synthesis of 6-methylsalicylic acid by the polyketide synthase (PKS) patK via condensation of acetate and malonate units. The 6-methylsalicylic acid decarboxylase patG then catalyzes the decarboxylation of 6-methylsalicylic acid to yield m-cresol (also known as 3-methylphenol). These first reactions occur in the cytosol. The intermediate m-cresol is then transported into the endoplasmic reticulum where the cytochrome P450 monooxygenase patH converts it to m-hydroxybenzyl alcohol, which is further converted to gentisyl alcohol by the cytochrome P450 monooxygenase patI. The oxidoreductases patJ and patO further convert gentisyl alcohol to isoepoxydon in the vacuole. PatN catalyzes then the transformation of isoepoxydon into phyllostine. The cluster protein patF is responsible for the conversion from phyllostine to neopatulin whereas the alcohol dehydrogenase patD converts neopatulin to E-ascladiol. The steps between isoepoxydon and E-ascladiol occur in the cytosol, and E-ascladiol is probably secreted to the extracellular space by one of the cluster-specific transporters patC or patM. Finally, the secreted patulin synthase patE catalyzes the conversion of E-ascladiol to patulin. The polypeptide is Cytochrome P450 monooxygenase patI (Aspergillus clavatus (strain ATCC 1007 / CBS 513.65 / DSM 816 / NCTC 3887 / NRRL 1 / QM 1276 / 107)).